The primary structure comprises 133 residues: Agouti-signaling protein (133 aa).

The N-terminal stretch at 1–22 (MDVSRLLLATLLVCLCFLTAYS) is a signal peptide. A glycan (N-linked (GlcNAc...) asparagine) is linked at Asn39. Positions 56 to 95 (NKKSKKISRNEAEKKKRPSKRKAPMKNVARTRPPPPTPCV) are disordered. Residues 70–79 (KKRPSKRKAP) show a composition bias toward basic residues. Cystine bridges form between Cys94–Cys109, Cys101–Cys115, Cys108–Cys126, Cys112–Cys133, and Cys117–Cys124. Residues 94 to 133 (CVATRDSCKPPAPACCDPCAFCQCRFFRSACSCRVLNPTC) form the Agouti domain.

The protein resides in the secreted. In terms of biological role, involved in the regulation of melanogenesis. The binding of ASP to MC1R precludes alpha-MSH initiated signaling and thus blocks production of cAMP, leading to a down-regulation of eumelanogenesis (brown/black pigment) and thus increasing synthesis of pheomelanin (yellow/red pigment). The chain is Agouti-signaling protein (ASIP) from Bos taurus (Bovine).